We begin with the raw amino-acid sequence, 535 residues long: WD repeat-containing protein 25 (535 aa).

Disordered stretches follow at residues 1–108 (MASL…PRPS) and 141–160 (DQSTFESTAGNASSSQRKRG). The span at 141–155 (DQSTFESTAGNASSS) shows a compositional bias: polar residues. 7 WD repeats span residues 235–277 (GHRG…HCLQ), 281–320 (VHSEAVRAARWSPCGRRILSGGFDFALHLTDLETGTQVFS), 321–362 (GQSD…VVKG), 365–411 (ATIQ…KISN), 415–454 (HERYTCPSLALHPREPVFLAQTNGNYLALFSSVWPYRMSR), 460–501 (GHKV…RACT), and 504–535 (GHTQACLGTTYHPVLPSVLGTCSWGGDIKIWH).

This chain is WD repeat-containing protein 25 (Wdr25), found in Mus musculus (Mouse).